The following is a 208-amino-acid chain: Small ribosomal subunit protein uS4A (208 aa).

The region spanning 98 to 164 (TRLDNVVYTL…AKIQSAIQAV (67 aa)) is the S4 RNA-binding domain.

Belongs to the universal ribosomal protein uS4 family. As to quaternary structure, part of the 30S ribosomal subunit. Contacts protein S5. The interaction surface between S4 and S5 is involved in control of translational fidelity.

Functionally, one of the primary rRNA binding proteins, it binds directly to 16S rRNA where it nucleates assembly of the body of the 30S subunit. In terms of biological role, with S5 and S12 plays an important role in translational accuracy. This is Small ribosomal subunit protein uS4A from Bdellovibrio bacteriovorus (strain ATCC 15356 / DSM 50701 / NCIMB 9529 / HD100).